Reading from the N-terminus, the 207-residue chain is Large ribosomal subunit protein uL4 (207 aa).

The segment at A55–G76 is disordered. Basic residues predominate over residues K63 to G76.

It belongs to the universal ribosomal protein uL4 family. Part of the 50S ribosomal subunit.

Its function is as follows. One of the primary rRNA binding proteins, this protein initially binds near the 5'-end of the 23S rRNA. It is important during the early stages of 50S assembly. It makes multiple contacts with different domains of the 23S rRNA in the assembled 50S subunit and ribosome. In terms of biological role, forms part of the polypeptide exit tunnel. The sequence is that of Large ribosomal subunit protein uL4 from Phytoplasma mali (strain AT).